Here is a 356-residue protein sequence, read N- to C-terminus: Proline-rich protein 19 (356 aa).

A compositionally biased stretch (polar residues) spans 1 to 12 (MDTQGPVSQPFQ). 4 disordered regions span residues 1–53 (MDTQ…RDPP), 95–143 (LVPG…ELSG), 216–255 (INSPDQVPEQERQRKQQGTKEFTFPMPYTSSMPTAHRGSL), and 312–331 (PSSPLLPRTSVLDWSPSPPS). Residues 19-29 (RVRRRKTRRER) show a composition bias toward basic residues.

Interacts with CNTD1.

It is found in the nucleus. The protein resides in the chromosome. Functionally, promotes meiotic crossing over formation through its interaction with CNTD1 by participating in the crossover differentiation step of crossover-specific recombination intermediates. The chain is Proline-rich protein 19 from Homo sapiens (Human).